Here is a 384-residue protein sequence, read N- to C-terminus: Glycerol 3-phosphate oxidase (384 aa).

Residues 1 to 17 (MQTIDVLIVGGGVIGTS) form the signal peptide. Isoleucine 14 provides a ligand contact to FAD. Cysteine 18 carries N-palmitoyl cysteine lipidation. Cysteine 18 is lipidated: S-diacylglycerol cysteine. FAD is bound by residues glutamate 33, 42–43 (TS), and 47–49 (SGV). Positions 47 and 51 each coordinate sn-glycerol 3-phosphate. Catalysis depends on histidine 51, which acts as the Proton acceptor. Valine 177 serves as a coordination point for FAD. Sn-glycerol 3-phosphate contacts are provided by lysine 258 and arginine 320. 346 to 347 (MK) is a binding site for FAD. Serine 348 is a binding site for sn-glycerol 3-phosphate. Residue threonine 352 participates in FAD binding.

Monomer. The cofactor is FAD.

It is found in the cytoplasm. The protein localises to the cell membrane. The enzyme catalyses sn-glycerol 3-phosphate + O2 = dihydroxyacetone phosphate + H2O2. It functions in the pathway polyol metabolism; glycerol degradation via glycerol kinase pathway; glycerone phosphate from sn-glycerol 3-phosphate (aerobic route): step 1/1. Catalyzes the oxidation of glycerol 3-phosphate to dihydroxyacetone phosphate (DHAP), with a reduction of O2 to H2O2. The formation of hydrogen peroxide by this enzyme is crucial for cytotoxic effects on host cells. Does not show any dehydrogenase activity with NAD(+). This is Glycerol 3-phosphate oxidase from Mycoplasma genitalium (strain ATCC 33530 / DSM 19775 / NCTC 10195 / G37) (Mycoplasmoides genitalium).